The primary structure comprises 282 residues: MKKRFLSICTMTIAALATTTMVNTSYAKTDTESHNHSSLGTENKNVLDINSSSHNIKPSQNKSYPSVILPNNNRHQIFNTTQGHYDAVSFIYIPIDGGYMSGSGVVVGENEILTNKHVVNGAKGNPRNISVHPSAKNENDYPNGKFVGQEIIPYPGNSDLAILRVSPNEHNQHIGQVVKPATISSNTDTRINENITVTGYPGDKPLATMWESVGKVVYIGGEELRYDLSTVGGNSGSPVFNGKNQVIGIHYGGVDNKYNSSVYINDFVQQFLRNNIPDINIQ.

A signal peptide spans 1–27; it reads MKKRFLSICTMTIAALATTTMVNTSYA. The propeptide occupies 28–66; that stretch reads KTDTESHNHSSLGTENKNVLDINSSSHNIKPSQNKSYPS. Catalysis depends on charge relay system residues His-117, Asp-159, and Ser-235.

The protein belongs to the peptidase S1B family. As to quaternary structure, monomer.

Its subcellular location is the secreted. The enzyme catalyses Preferential cleavage: Glu-|-Xaa, Asp-|-Xaa.. Its activity is regulated as follows. Inhibited by diisopropyl fluorophosphate. Functionally, exhibits a significant hydrolytic activity for the carbonyl side of glutamic acid. Shows activity toward human fibronectin and type 1 collagen. The polypeptide is Glutamyl endopeptidase (gseA) (Staphylococcus epidermidis).